The sequence spans 242 residues: Venom nerve growth factor 1 (242 aa).

The first 18 residues, 1 to 18 (MSMLCYTLIIAFLIGIWA), serve as a signal peptide directing secretion. A propeptide spanning residues 19-125 (APQSEDNVPL…ALNRNIQAKR (107 aa)) is cleaved from the precursor. 3 cysteine pairs are disulfide-bonded: Cys139-Cys203, Cys181-Cys231, and Cys191-Cys233.

It belongs to the NGF-beta family. As to quaternary structure, homodimer; non-covalently linked. In terms of tissue distribution, expressed by the venom gland.

The protein resides in the secreted. Its function is as follows. Nerve growth factor is important for the development and maintenance of the sympathetic and sensory nervous systems. It stimulates division and differentiation of sympathetic and embryonic sensory neurons as well as basal forebrain cholinergic neurons in the brain. Its relevance in the snake venom is not clear. However, it has been shown to inhibit metalloproteinase-dependent proteolysis of platelet glycoprotein Ib alpha, suggesting a metalloproteinase inhibition to prevent metalloprotease autodigestion and/or protection against prey proteases. Binds a lipid between the two protein chains in the homodimer. The lipid-bound form promotes histamine relase from mouse mast cells, contrary to the lipid-free form. This is Venom nerve growth factor 1 from Pseudechis australis (Mulga snake).